The chain runs to 210 residues: Translation initiation factor IF-3 (210 aa).

Positions 169–210 (APKQAPAPKKERTEESAEKAGSAGETEPVPAASAAAEAPANV) are disordered. Residues 176-186 (PKKERTEESAE) are compositionally biased toward basic and acidic residues. The segment covering 187–210 (KAGSAGETEPVPAASAAAEAPANV) has biased composition (low complexity).

The protein belongs to the IF-3 family. In terms of assembly, monomer.

The protein localises to the cytoplasm. IF-3 binds to the 30S ribosomal subunit and shifts the equilibrium between 70S ribosomes and their 50S and 30S subunits in favor of the free subunits, thus enhancing the availability of 30S subunits on which protein synthesis initiation begins. The sequence is that of Translation initiation factor IF-3 from Deinococcus deserti (strain DSM 17065 / CIP 109153 / LMG 22923 / VCD115).